Reading from the N-terminus, the 671-residue chain is DNA ligase (671 aa).

NAD(+)-binding positions include 32 to 36 (DAEYD), 81 to 82 (SL), and E113. Residue K115 is the N6-AMP-lysine intermediate of the active site. Residues R136, E173, K290, and K314 each coordinate NAD(+). Positions 408, 411, 426, and 432 each coordinate Zn(2+). The BRCT domain occupies 593–671 (EIDSPFAGKT…EAEMLRLLGS (79 aa)).

Belongs to the NAD-dependent DNA ligase family. LigA subfamily. Mg(2+) serves as cofactor. The cofactor is Mn(2+).

It carries out the reaction NAD(+) + (deoxyribonucleotide)n-3'-hydroxyl + 5'-phospho-(deoxyribonucleotide)m = (deoxyribonucleotide)n+m + AMP + beta-nicotinamide D-nucleotide.. DNA ligase that catalyzes the formation of phosphodiester linkages between 5'-phosphoryl and 3'-hydroxyl groups in double-stranded DNA using NAD as a coenzyme and as the energy source for the reaction. It is essential for DNA replication and repair of damaged DNA. This chain is DNA ligase, found in Escherichia coli O7:K1 (strain IAI39 / ExPEC).